Here is a 347-residue protein sequence, read N- to C-terminus: MNQLYQRSFLRLMDFSMNEIMYILRLSHFLKQQKSNHTETQKLHKKNIVLIFENHSTRTRCAFEVAAFDQGARVTCLTPNISQIGHKESIKDTAKILGRMYHGIQYRGYNQDTINIFAQYSNVPVWNGLTEQFHPTQMLADLMTMQEQVPHKSFCKIKLAYVGDARNNIGNSLLEAASIIGFDLRLVSPREFWPQQELLTTCRKLTKLNKVNILLTENIQEGVKDVDFLYTDVWVSMGENEKVWTHRISLLSPYQVNQDMINYTGNSNVKFLHCLPALHNNETTIGKKIAHKHNLFNGLEVTNEIFESKHSIVFDQAENRLHTIKALMISTLLPNLYHKNITFHTKN.

Carbamoyl phosphate contacts are provided by residues 56 to 59 (STRT), Q83, R107, and 134 to 137 (HPTQ). L-ornithine is bound by residues N168, D232, and 236–237 (SM). Carbamoyl phosphate is bound by residues 274–275 (CL) and R320.

Belongs to the aspartate/ornithine carbamoyltransferase superfamily. OTCase family.

Its subcellular location is the cytoplasm. It catalyses the reaction carbamoyl phosphate + L-ornithine = L-citrulline + phosphate + H(+). In terms of biological role, reversibly catalyzes the transfer of the carbamoyl group from carbamoyl phosphate (CP) to the N(epsilon) atom of ornithine (ORN) to produce L-citrulline. The sequence is that of Ornithine carbamoyltransferase from Blochmanniella floridana.